A 672-amino-acid chain; its full sequence is MRAIDVKTGMKIPWDVRYSLSLFIFLSSILFLSNGQDYGMPGEDGGGGAEPPPEMAHCNGIFMSYNFGSREREYPHVKNVTAQSWAFKSTAMIVNAGREELKGWQMFIGFRHKELIVSATGATPMDGDYPLDASNGTTFVGSPNMDLKTSIETAGDFTQISANIEITGTLFGVSKAVTPMPRTIKLTNDGWECPAAKRKGGSMHVCCKRNPKIKNKIGLKTKFAPRRYGDLNIVYDVLQSFDSNYLAQVTIDNDNPLGRLDRWNLTFEWMRGEFINTMRGAYTHKKDPSECLYSKAGQYYKDLDFSQVMNCQRKPAISDLPPEKKEDNMTGKLPFCCKNGTLLPPIMDPSKSRSMFQLQVFKLPPDLNRTALYPPQHWKIDGVLNPQYKCGPPVRVDPSQFPDPSGLLAVTYAISSWQVVCNITKPKAQASRCCVSFSAFYNNSAVPCNTCACGCNDIDTDTCNANSNPLLLPPDALLVPFDNRTLKAKAWAKQNHMPVPKKLPCPDNCGVSINWHVSTDYKNGWTARLTVFNWRDFAFEDWFVAIDMGKAGPGYENVYSFNGTRVPPSNRTVIFQGLPGMNYLVGQVNGTNPLRDPPVPGKQQSVISFTKKNIKGLNIPEGDGFPTKLFFNGEECALPKHFPKKSSGHRRGISVSMSFVFATIAAFALMMD.

The signal sequence occupies residues 1–35; it reads MRAIDVKTGMKIPWDVRYSLSLFIFLSSILFLSNG. Asparagine 79, asparagine 135, asparagine 264, asparagine 328, asparagine 339, asparagine 368, asparagine 422, asparagine 442, asparagine 483, asparagine 562, asparagine 570, and asparagine 589 each carry an N-linked (GlcNAc...) asparagine glycan. Residues 502–607 enclose the CBM2 domain; sequence KLPCPDNCGV…PVPGKQQSVI (106 aa). Serine 646 carries GPI-anchor amidated serine lipidation. Residues 647-672 constitute a propeptide, removed in mature form; sequence SGHRRGISVSMSFVFATIAAFALMMD. Positions 664–672 match the Required for processing by the PIG complex, a critical step for apical plasma membrane localization in pollen tubes motif; that stretch reads IAAFALMMD.

Belongs to the COBRA family. In terms of processing, the GPI-anchor attachment at Ser-646 requires APTG1. Expressed in roots, stems, leaves, flowers and siliques. Specific expression in the pollen tube.

The protein resides in the cell membrane. It localises to the cytoplasm. The protein localises to the vesicle. Involved in the deposition of apical pectin cap and cellulose microfibrils in pollen tubes. Not essential for pollen development, hydration or germination, but required for pollen tubes growth in the female transmitting tract of pistil and toward micropyles, via the perception of ovule guidance cues. This chain is COBRA-like protein 10, found in Arabidopsis thaliana (Mouse-ear cress).